A 218-amino-acid polypeptide reads, in one-letter code: Pyridoxine/pyridoxamine 5'-phosphate oxidase (218 aa).

FMN is bound by residues 66–71 (RVVLLK), arginine 87, lysine 88, and glutamine 110. Lysine 71 is a substrate binding site. 3 residues coordinate substrate: tyrosine 128, arginine 132, and serine 136. FMN contacts are provided by residues 145–146 (QS) and tryptophan 190. Residue 196 to 198 (RLH) participates in substrate binding. Arginine 200 serves as a coordination point for FMN.

Belongs to the pyridoxamine 5'-phosphate oxidase family. As to quaternary structure, homodimer. It depends on FMN as a cofactor.

It catalyses the reaction pyridoxamine 5'-phosphate + O2 + H2O = pyridoxal 5'-phosphate + H2O2 + NH4(+). It carries out the reaction pyridoxine 5'-phosphate + O2 = pyridoxal 5'-phosphate + H2O2. It participates in cofactor metabolism; pyridoxal 5'-phosphate salvage; pyridoxal 5'-phosphate from pyridoxamine 5'-phosphate: step 1/1. Its pathway is cofactor metabolism; pyridoxal 5'-phosphate salvage; pyridoxal 5'-phosphate from pyridoxine 5'-phosphate: step 1/1. Functionally, catalyzes the oxidation of either pyridoxine 5'-phosphate (PNP) or pyridoxamine 5'-phosphate (PMP) into pyridoxal 5'-phosphate (PLP). The sequence is that of Pyridoxine/pyridoxamine 5'-phosphate oxidase from Anaplasma marginale (strain St. Maries).